The sequence spans 366 residues: Protein BIG GRAIN 1-like B (366 aa).

Disordered stretches follow at residues 42–73 and 129–148; these read DSSTNSSSMRKTKHQNREDTRVSANRRDDFNR and FERSPQNHRPNSSNKQEHGS. The span at 56-73 shows a compositional bias: basic and acidic residues; sequence QNREDTRVSANRRDDFNR.

This sequence belongs to the BIG GRAIN 1 (BG1) plant protein family.

It is found in the cell membrane. Involved in auxin transport. Regulator of the auxin signaling pathway. In Arabidopsis thaliana (Mouse-ear cress), this protein is Protein BIG GRAIN 1-like B.